We begin with the raw amino-acid sequence, 457 residues long: Protein PIN-LIKES 2 (457 aa).

The Lumenal portion of the chain corresponds to 1-15 (MSGFSSGNVNSRVVD). Residues 16-36 (ILSGVVPLLKLICLTVIGLLL) traverse the membrane as a helical segment. Residues 37 to 54 (AHPKTQLVPRATFRLLSK) lie on the Cytoplasmic side of the membrane. Residues 55-75 (LVFALFLPCLIFTELGESITL) traverse the membrane as a helical segment. Topologically, residues 76–85 (DNIVQWWFIP) are lumenal. Residues 86 to 106 (VNVLLSAVVGSLIGYLVVLIC) traverse the membrane as a helical segment. The Cytoplasmic portion of the chain corresponds to 107-116 (RPPPEFNRFT). Residues 117-137 (IVMTAFGNTGNLLLAIVSSVC) form a helical membrane-spanning segment. Residues 138 to 151 (HTKTNPFGPNCNSR) lie on the Lumenal side of the membrane. Residues 152 to 172 (GVSYVSFAQWVAVILVYTVVY) form a helical membrane-spanning segment. Residues 173–291 (HMMEPPLEYY…PVKHILQPPT (119 aa)) lie on the Cytoplasmic side of the membrane. Residues 292–312 (IASLLAIIIGSVPQLKSVVFG) form a helical membrane-spanning segment. At 313–322 (YDAPLSFITD) the chain is on the lumenal side. A helical transmembrane segment spans residues 323 to 343 (SLNIMGSAMVPSVMLVLGGML). The Cytoplasmic segment spans residues 344–356 (SEGPNESTLGLRT). Residues 357 to 377 (TIGISVARLLVLPLVGIGIVM) form a helical membrane-spanning segment. Residues 378-393 (SADKLGLISSADPMFK) are Lumenal-facing. A helical transmembrane segment spans residues 394–414 (FVLLLQYSTPSAILLGAIASL). Over 415–424 (RGYAVREASA) the chain is Cytoplasmic. The chain crosses the membrane as a helical span at residues 425 to 445 (LLFWQHIFALLSLTFYIVIFF). Topologically, residues 446-457 (KLTVETTVQGMQ) are lumenal.

It belongs to the auxin efflux carrier (TC 2.A.69.2) family. In terms of tissue distribution, expressed in seedlings, rosette and cauline leaves, flowers and siliques.

It is found in the endoplasmic reticulum membrane. Its function is as follows. Involved in cellular auxin homeostasis by regulating auxin metabolism. Regulates intracellular auxin accumulation at the endoplasmic reticulum and thus auxin availability for nuclear auxin signaling. The chain is Protein PIN-LIKES 2 from Arabidopsis thaliana (Mouse-ear cress).